The primary structure comprises 188 residues: Archaemetzincin (188 aa).

Histidine 137 lines the Zn(2+) pocket. Residue glutamate 138 is the Proton acceptor of the active site. Zn(2+) is bound by residues histidine 141, histidine 147, cysteine 148, cysteine 153, cysteine 172, and cysteine 175.

This sequence belongs to the peptidase M54 family. As to quaternary structure, monomer. Zn(2+) is required as a cofactor.

Functionally, probable zinc metalloprotease whose natural substrate is unknown. The polypeptide is Archaemetzincin (Pyrococcus horikoshii (strain ATCC 700860 / DSM 12428 / JCM 9974 / NBRC 100139 / OT-3)).